A 396-amino-acid polypeptide reads, in one-letter code: S-adenosylmethionine synthase (396 aa).

Position 16 (histidine 16) interacts with ATP. Aspartate 18 is a binding site for Mg(2+). Glutamate 44 provides a ligand contact to K(+). Positions 57 and 100 each coordinate L-methionine. The interval 100–110 (QSPDINQGVDR) is flexible loop. ATP is bound by residues 165–167 (DAK), aspartate 240, 246–247 (RK), alanine 263, and lysine 267. Aspartate 240 contacts L-methionine. Residue lysine 271 participates in L-methionine binding.

This sequence belongs to the AdoMet synthase family. As to quaternary structure, homotetramer; dimer of dimers. It depends on Mg(2+) as a cofactor. K(+) serves as cofactor.

The protein resides in the cytoplasm. The catalysed reaction is L-methionine + ATP + H2O = S-adenosyl-L-methionine + phosphate + diphosphate. It participates in amino-acid biosynthesis; S-adenosyl-L-methionine biosynthesis; S-adenosyl-L-methionine from L-methionine: step 1/1. Catalyzes the formation of S-adenosylmethionine (AdoMet) from methionine and ATP. The overall synthetic reaction is composed of two sequential steps, AdoMet formation and the subsequent tripolyphosphate hydrolysis which occurs prior to release of AdoMet from the enzyme. The sequence is that of S-adenosylmethionine synthase from Pseudomonas fluorescens (strain ATCC BAA-477 / NRRL B-23932 / Pf-5).